The following is a 286-amino-acid chain: Expansin-like protein 1 (286 aa).

The N-terminal stretch at 1–21 is a signal peptide; it reads MKTFVLFVILLCLTFLSISKS. Topologically, residues 22–265 are extracellular; the sequence is ETCPFSQSLV…TGASIGTPSD (244 aa). One can recognise an Expansin-like EG45 domain in the interval 44–145; it reads AGNCGYENLM…YKVPCGVNGN (102 aa). 2 disulfides stabilise this stretch: cysteine 47–cysteine 77 and cysteine 80–cysteine 140. N-linked (GlcNAc...) asparagine glycans are attached at residues asparagine 82 and asparagine 89. The chain crosses the membrane as a helical span at residues 266–286; the sequence is ASSLTLYALFSLTILFLVMLN.

It belongs to the expansin family. Expansin A subfamily.

Its subcellular location is the membrane. Functionally, may serve to lubricate the movement of the cellulose microfibrils during cell growth and wall extension and/or they may serve to maintain the fluid state of the slug cell wall. The protein is Expansin-like protein 1 (expl1) of Dictyostelium discoideum (Social amoeba).